A 183-amino-acid polypeptide reads, in one-letter code: Adenylate kinase (183 aa).

An ATP-binding site is contributed by 12–17 (GAGKGT). An NMP region spans residues 32-61 (STGDLLRAEVSAGSALGQEAESVMNRGELV). AMP-binding positions include Thr-33, Arg-38, 59-61 (ELV), 86-89 (GFPR), and Gln-93. The segment at 127–133 (SRGRDDD) is LID. Arg-128 provides a ligand contact to ATP. Residues Arg-130 and Arg-141 each contribute to the AMP site. Gly-169 is an ATP binding site.

It belongs to the adenylate kinase family. As to quaternary structure, monomer.

It localises to the cytoplasm. The enzyme catalyses AMP + ATP = 2 ADP. It participates in purine metabolism; AMP biosynthesis via salvage pathway; AMP from ADP: step 1/1. Functionally, catalyzes the reversible transfer of the terminal phosphate group between ATP and AMP. Plays an important role in cellular energy homeostasis and in adenine nucleotide metabolism. This Synechococcus sp. (strain CC9311) protein is Adenylate kinase.